Consider the following 500-residue polypeptide: Probable cytosol aminopeptidase (500 aa).

2 residues coordinate Mn(2+): K264 and D269. Residue K276 is part of the active site. Residues D287, D346, and E348 each contribute to the Mn(2+) site. Residue R350 is part of the active site.

This sequence belongs to the peptidase M17 family. Mn(2+) is required as a cofactor.

The protein resides in the cytoplasm. The catalysed reaction is Release of an N-terminal amino acid, Xaa-|-Yaa-, in which Xaa is preferably Leu, but may be other amino acids including Pro although not Arg or Lys, and Yaa may be Pro. Amino acid amides and methyl esters are also readily hydrolyzed, but rates on arylamides are exceedingly low.. The enzyme catalyses Release of an N-terminal amino acid, preferentially leucine, but not glutamic or aspartic acids.. In terms of biological role, presumably involved in the processing and regular turnover of intracellular proteins. Catalyzes the removal of unsubstituted N-terminal amino acids from various peptides. In Rhodopseudomonas palustris (strain ATCC BAA-98 / CGA009), this protein is Probable cytosol aminopeptidase.